The chain runs to 688 residues: MARQFSLEKTRNIGIIAHIDAGKTTTTERILFHTGKIHKIGETHDGASQMDWMEQEQERGITITSAATTAFWKNHRINIIDTPGHVDFTVEVSRSLRVLDGAVTVIDAQAGVEPQTETVWRQASEYKVPRVIFVNKMDKVGADFAYAIETLKQRLGVHASAIQWPIGSENDFNGIIDLVEMNAFEYDNTSQETGKVVSIPSDLESITQTKRKELIETLSTLDEELMIYYLEEKPISSEMLKNSIRKATLQASFFPVLCGSSFKNKGVVKMLDAVVDYLPAPCDVAAIVGFDSDNQEIVRTGLDEEPFTALAFKVMTDPYVGKLTFFRIYSGSVKAGSYVTNTTKGTKERFGRLLQMHANSREEVKEAYTGDILAVVGLKATTTGDTLASEGQTIILESMNFPEPVIEIAVEPKTKADQDKMGIALAKLAEEDPTFKVFSNHETGQTIIAGMGELHLDIIIERLKREFKVQANVTEPQVAYRETITQETETEGKFIRQSGGRGQYGHVWMRFEPNPGKGFEFVNKIVGGVVPREYVPAVQKGIQEALAGGILAGYQIIDVKATLFDGSYHDVDSSEIAFKIAASMALKETKTKGNPVILEPIMDVEVVTPNDYVGNVIGDLTSRRGRLENQESRTNAVAIRAFVPLSEMFGYATVLRSNTQGRATFIMQFAKYEKAPKSITEEIIKKRA.

The tr-type G domain maps to 8-282 (EKTRNIGIIA…AVVDYLPAPC (275 aa)). Residues 17 to 24 (AHIDAGKT), 81 to 85 (DTPGH), and 135 to 138 (NKMD) contribute to the GTP site.

It belongs to the TRAFAC class translation factor GTPase superfamily. Classic translation factor GTPase family. EF-G/EF-2 subfamily.

The protein resides in the cytoplasm. In terms of biological role, catalyzes the GTP-dependent ribosomal translocation step during translation elongation. During this step, the ribosome changes from the pre-translocational (PRE) to the post-translocational (POST) state as the newly formed A-site-bound peptidyl-tRNA and P-site-bound deacylated tRNA move to the P and E sites, respectively. Catalyzes the coordinated movement of the two tRNA molecules, the mRNA and conformational changes in the ribosome. This chain is Elongation factor G, found in Aster yellows witches'-broom phytoplasma (strain AYWB).